Consider the following 682-residue polypeptide: Potassium-transporting ATPase ATP-binding subunit (682 aa).

Transmembrane regions (helical) follow at residues Pro-34–Ala-54, Ala-62–Ala-82, Ile-219–Leu-239, and Val-254–Ile-274. The active-site 4-aspartylphosphate intermediate is Asp-307. Residues Asp-344, Glu-348, Phe-377–Ser-384, and Lys-395 contribute to the ATP site. Asp-518 and Asp-522 together coordinate Mg(2+). 3 consecutive transmembrane segments (helical) span residues Phe-588–Met-608, Ala-616–Leu-636, and Ile-656–Leu-676.

Belongs to the cation transport ATPase (P-type) (TC 3.A.3) family. Type IA subfamily. In terms of assembly, the system is composed of three essential subunits: KdpA, KdpB and KdpC.

It localises to the cell inner membrane. It carries out the reaction K(+)(out) + ATP + H2O = K(+)(in) + ADP + phosphate + H(+). In terms of biological role, part of the high-affinity ATP-driven potassium transport (or Kdp) system, which catalyzes the hydrolysis of ATP coupled with the electrogenic transport of potassium into the cytoplasm. This subunit is responsible for energy coupling to the transport system and for the release of the potassium ions to the cytoplasm. The polypeptide is Potassium-transporting ATPase ATP-binding subunit (Escherichia coli O6:K15:H31 (strain 536 / UPEC)).